The chain runs to 596 residues: Aspartic proteinase yapsin-7 (596 aa).

Residues 1–25 (MTCLILWYLWLISTFQLEFATASTA) form the signal peptide. N-linked (GlcNAc...) asparagine glycosylation is found at Asn26 and Asn59. The Lumenal segment spans residues 26 to 575 (NTTTTAKSGT…SPYTFNKDPA (550 aa)). The Peptidase A1 domain occupies 56 to 440 (YYVNSTFGTP…DLEDNTIAIA (385 aa)). The active site involves Asp74. 7 N-linked (GlcNAc...) asparagine glycosylation sites follow: Asn106, Asn131, Asn140, Asn143, Asn148, Asn175, and Asn308. The active site involves Asp321. Residues Asn391, Asn455, Asn478, Asn484, Asn549, and Asn552 are each glycosylated (N-linked (GlcNAc...) asparagine). Residues 576–596 (GHVTRIASLLLLSIFSILIVL) form a helical membrane-spanning segment.

The protein belongs to the peptidase A1 family.

It localises to the cytoplasm. It is found in the endoplasmic reticulum membrane. The protein is Aspartic proteinase yapsin-7 (YPS7) of Saccharomyces cerevisiae (strain ATCC 204508 / S288c) (Baker's yeast).